The following is a 284-amino-acid chain: MAALVRAAVVRSQCRQLWRLFPRGHGLRDVAERPRPEEACSCLRSRAFSAGPPPPGAGPEPKGGQAGSHRPKPGPVSWKSLALTFAIGGSLLAGMKYFKKEKIEKLEKQRHRSIGKPLLGGPFSLTTHNGEPKTDKDYLGQWVLIYFGFTHCPDICPEELEKMIEVVEEIDSIPSLPNLTPLFITIDPERDTKEAIATYVKEFSPKLVGLTGTKEEIDGVARAYRVYYSPGPKDEDEDYIVDHTIIMYLIGPDGEFLDYFGQNKKKAEIAGSIAAHMRSHMKKR.

A disordered region spans residues 46–73 (RAFSAGPPPPGAGPEPKGGQAGSHRPKP). A helical transmembrane segment spans residues 81-98 (LALTFAIGGSLLAGMKYF). Residues 99–284 (KKEKIEKLEK…AHMRSHMKKR (186 aa)) lie on the Mitochondrial intermembrane side of the membrane. An important for dimerization region spans residues 101-114 (EKIEKLEKQRHRSI). Cu cation-binding residues include cysteine 152, cysteine 156, and histidine 243. Cysteine 152 and cysteine 156 are disulfide-bonded.

It belongs to the SCO1/2 family. Homodimer. Interacts with COA6. Found in a complex with TMEM177, COX20, COA6, MT-CO2/COX2, COX18 and SCO2. Interacts with TMEM177 in a COX20-dependent manner. Interacts with COX20 in a MT-CO2/COX2- and COX18-dependent manner. Interacts with COX16.

The protein localises to the mitochondrion. It is found in the mitochondrion inner membrane. In terms of biological role, copper metallochaperone essential for the maturation of cytochrome c oxidase subunit II (MT-CO2/COX2). Not required for the synthesis of MT-CO2/COX2 but plays a crucial role in stabilizing MT-CO2/COX2 during its subsequent maturation. Involved in transporting copper to the Cu(A) site on MT-CO2/COX2. Plays an important role in the regulation of copper homeostasis by controlling the abundance and cell membrane localization of copper transporter CTR1. This is Protein SCO1 homolog, mitochondrial (Sco1) from Mus musculus (Mouse).